The chain runs to 137 residues: MLAPKRVKFRKRQRGRLKGKDERGSYVAFGEFGLKAISSGRITARQIEAARITINRQVKRGGKLWIRIFPHLPITKKPAETRMGKGKGNPEFWIAEIRPGRVLFEMAGVDEETARKALHLAAFKLPVETSFVKRNVL.

Belongs to the universal ribosomal protein uL16 family. Part of the 50S ribosomal subunit.

In terms of biological role, binds 23S rRNA and is also seen to make contacts with the A and possibly P site tRNAs. The sequence is that of Large ribosomal subunit protein uL16 from Leptospira biflexa serovar Patoc (strain Patoc 1 / Ames).